Reading from the N-terminus, the 228-residue chain is Translin (228 aa).

The segment at 86 to 90 is DNA/RNA binding; that stretch reads RFHEH. Positions 177–198 are leucine-zipper; the sequence is LDSGFRLLNLKNDSLRKRYDGL. Position 187 is an N6-acetyllysine (K187). Phosphoserine is present on S190. K199 carries the post-translational modification N6-acetyllysine.

It belongs to the translin family. In terms of assembly, ring-shaped heterooctamer of six TSN and two TSNAX subunits, DNA/RNA binding occurs inside the ring.

The protein resides in the cytoplasm. Its subcellular location is the nucleus. In terms of biological role, DNA-binding protein that specifically recognizes consensus sequences at the breakpoint junctions in chromosomal translocations, mostly involving immunoglobulin (Ig)/T-cell receptor gene segments. Seems to recognize single-stranded DNA ends generated by staggered breaks occurring at recombination hot spots. Exhibits both single-stranded and double-stranded endoribonuclease activity. May act as an activator of RNA-induced silencing complex (RISC) by facilitating endonucleolytic cleavage of the siRNA passenger strand. The chain is Translin (TSN) from Cricetulus griseus (Chinese hamster).